The following is a 389-amino-acid chain: UDP-D-apiose/UDP-D-xylose synthase 2 (389 aa).

Residues Phe-28, Ile-29, Asp-49, Asn-76, Ile-77, and Leu-96 each contribute to the NAD(+) site. The UDP-alpha-D-glucuronate site is built by Tyr-105, Thr-139, Glu-141, Arg-182, and Tyr-185. Residues Tyr-185 and Lys-189 each coordinate NAD(+). Tyr-185 acts as the Proton acceptor in catalysis. Asn-214 lines the UDP-alpha-D-glucuronate pocket. NAD(+) contacts are provided by Trp-215 and Arg-235. UDP-alpha-D-glucuronate is bound by residues Lys-251, Val-253, Arg-260, Tyr-331, Tyr-335, Asp-337, and Arg-341.

Belongs to the NAD(P)-dependent epimerase/dehydratase family. In terms of assembly, homodimer and heterodimer with AXS1. Requires NAD(+) as cofactor. In terms of tissue distribution, widely expressed with stronger expression in dark-grown seedlings, leaves and stems, and lower levels in flowers, siliques, pistils, pollen and roots.

Its subcellular location is the cytoplasm. The catalysed reaction is UDP-alpha-D-glucuronate + H(+) = UDP-alpha-D-xylose + CO2. It carries out the reaction UDP-alpha-D-glucuronate + H(+) = UDP-alpha-D-apiose + CO2. Its function is as follows. Together with AXS1, catalyzes the conversion of UDP-D-glucuronate into a mixture of UDP-D-apiose (UDP-Api) as the main product and UDP-D-xylose to a lesser extent, via a cycle of oxidation and reduction. D-Apiose (3-C-hydroxymethyl-d-erythrose) is the only plant cell wall monosaccharide with a branched carbon skeleton and is found in rhamnogalacturonan II (RG-II), apiogalacturonan, and several apioglycosides. The polypeptide is UDP-D-apiose/UDP-D-xylose synthase 2 (Arabidopsis thaliana (Mouse-ear cress)).